The following is a 61-amino-acid chain: Small ribosomal subunit protein uS14 (61 aa).

Residues cysteine 24, cysteine 27, cysteine 40, and cysteine 43 each coordinate Zn(2+).

The protein belongs to the universal ribosomal protein uS14 family. Zinc-binding uS14 subfamily. As to quaternary structure, part of the 30S ribosomal subunit. Contacts proteins S3 and S10. Zn(2+) is required as a cofactor.

In terms of biological role, binds 16S rRNA, required for the assembly of 30S particles and may also be responsible for determining the conformation of the 16S rRNA at the A site. This chain is Small ribosomal subunit protein uS14, found in Finegoldia magna (strain ATCC 29328 / DSM 20472 / WAL 2508) (Peptostreptococcus magnus).